We begin with the raw amino-acid sequence, 80 residues long: Translation initiation factor IF-1, chloroplastic (80 aa).

Residues 1–74 (MKEQKWIHEG…TRGRIIYRLR (74 aa)) form the S1-like domain.

Belongs to the IF-1 family. As to quaternary structure, component of the 30S ribosomal translation pre-initiation complex which assembles on the 30S ribosome in the order IF-2 and IF-3, IF-1 and N-formylmethionyl-tRNA(fMet); mRNA recruitment can occur at any time during PIC assembly.

It localises to the plastid. It is found in the chloroplast. In terms of biological role, one of the essential components for the initiation of protein synthesis. Stabilizes the binding of IF-2 and IF-3 on the 30S subunit to which N-formylmethionyl-tRNA(fMet) subsequently binds. Helps modulate mRNA selection, yielding the 30S pre-initiation complex (PIC). Upon addition of the 50S ribosomal subunit IF-1, IF-2 and IF-3 are released leaving the mature 70S translation initiation complex. This chain is Translation initiation factor IF-1, chloroplastic, found in Illicium oligandrum (Star anise).